A 341-amino-acid chain; its full sequence is Homeobox protein knotted-1-like 8 (341 aa).

Over residues 1 to 17 (MESFASLAGGGSSSTTA) the composition is skewed to low complexity. Disordered regions lie at residues 1-72 (MESF…AVQG), 121-148 (AAQQ…DQLD), and 187-207 (AESN…SDKQ). Over residues 187 to 196 (AESNCEGTGS) the composition is skewed to polar residues. The ELK domain occupies 207–227 (QLKHQLLRKYGGSLGDLRQVF). The homeobox; TALE-type DNA-binding region spans 228–291 (SKRTKKGKLP…NQRKRHWKPT (64 aa)).

Belongs to the TALE/KNOX homeobox family.

The protein resides in the nucleus. Functionally, probable transcription factor that may be involved in shoot formation during embryogenesis. The polypeptide is Homeobox protein knotted-1-like 8 (OSH43) (Oryza sativa subsp. japonica (Rice)).